The chain runs to 315 residues: Glutathione synthetase (315 aa).

The ATP-grasp domain maps to 125 to 310 (KLYTAWFADL…ITGMLMDAIE (186 aa)). ATP is bound at residue 151–207 (WEKHGDIIMKPLDGMGGASIFRVKEGDPNIGVIAETLTELGNRYCMAQNYLPAIKDG). Glu281 and Asn283 together coordinate Mg(2+).

The protein belongs to the prokaryotic GSH synthase family. Mg(2+) serves as cofactor. Mn(2+) is required as a cofactor.

The enzyme catalyses gamma-L-glutamyl-L-cysteine + glycine + ATP = glutathione + ADP + phosphate + H(+). The protein operates within sulfur metabolism; glutathione biosynthesis; glutathione from L-cysteine and L-glutamate: step 2/2. In Salmonella typhi, this protein is Glutathione synthetase.